We begin with the raw amino-acid sequence, 500 residues long: Cysteine-rich secretory protein LCCL domain-containing 1 (500 aa).

Residues Met1 to Ala23 form the signal peptide. One can recognise an SCP domain in the interval Leu66–Tyr206. The segment covering Glu254–Arg280 has biased composition (basic and acidic residues). Positions Glu254–Asn281 are disordered. LCCL domains are found at residues Met289–Phe384 and Thr390–Lys492. 4 cysteine pairs are disulfide-bonded: Cys295/Cys313, Cys317/Cys337, Cys396/Cys418, and Cys422/Cys445.

Belongs to the CRISP family.

It localises to the secreted. This Homo sapiens (Human) protein is Cysteine-rich secretory protein LCCL domain-containing 1 (CRISPLD1).